A 375-amino-acid polypeptide reads, in one-letter code: Erythronate-4-phosphate dehydrogenase (375 aa).

Ser49 lines the substrate pocket. NAD(+) is bound by residues Asp150 and Thr178. Residue Arg211 is part of the active site. Residue Asp231 coordinates NAD(+). The active site involves Glu236. Residue His253 is the Proton donor of the active site. Gly256 is a binding site for NAD(+).

The protein belongs to the D-isomer specific 2-hydroxyacid dehydrogenase family. PdxB subfamily. As to quaternary structure, homodimer.

Its subcellular location is the cytoplasm. The enzyme catalyses 4-phospho-D-erythronate + NAD(+) = (R)-3-hydroxy-2-oxo-4-phosphooxybutanoate + NADH + H(+). Its pathway is cofactor biosynthesis; pyridoxine 5'-phosphate biosynthesis; pyridoxine 5'-phosphate from D-erythrose 4-phosphate: step 2/5. In terms of biological role, catalyzes the oxidation of erythronate-4-phosphate to 3-hydroxy-2-oxo-4-phosphonooxybutanoate. The chain is Erythronate-4-phosphate dehydrogenase from Hydrogenovibrio crunogenus (strain DSM 25203 / XCL-2) (Thiomicrospira crunogena).